Here is a 463-residue protein sequence, read N- to C-terminus: UDP-N-acetylmuramoylalanine--D-glutamate ligase (463 aa).

109-115 (GTDGKST) serves as a coordination point for ATP.

It belongs to the MurCDEF family.

It is found in the cytoplasm. It catalyses the reaction UDP-N-acetyl-alpha-D-muramoyl-L-alanine + D-glutamate + ATP = UDP-N-acetyl-alpha-D-muramoyl-L-alanyl-D-glutamate + ADP + phosphate + H(+). It participates in cell wall biogenesis; peptidoglycan biosynthesis. Its function is as follows. Cell wall formation. Catalyzes the addition of glutamate to the nucleotide precursor UDP-N-acetylmuramoyl-L-alanine (UMA). This Leptospira interrogans serogroup Icterohaemorrhagiae serovar Lai (strain 56601) protein is UDP-N-acetylmuramoylalanine--D-glutamate ligase.